The chain runs to 207 residues: Large ribosomal subunit protein uL4 (207 aa).

A disordered region spans residues 48 to 75 (THSVKNRSAVRGGGRKPWRQKGTGRARQ). Basic residues predominate over residues 60 to 71 (GGRKPWRQKGTG).

The protein belongs to the universal ribosomal protein uL4 family. As to quaternary structure, part of the 50S ribosomal subunit.

Its function is as follows. One of the primary rRNA binding proteins, this protein initially binds near the 5'-end of the 23S rRNA. It is important during the early stages of 50S assembly. It makes multiple contacts with different domains of the 23S rRNA in the assembled 50S subunit and ribosome. Functionally, forms part of the polypeptide exit tunnel. The chain is Large ribosomal subunit protein uL4 from Staphylococcus carnosus (strain TM300).